The chain runs to 219 residues: uncharacterized protein (219 aa).

A helical transmembrane segment spans residues 13 to 32 (VFGLFLFSLIFFGLLSLATF).

The protein localises to the membrane. This is an uncharacterized protein from Aquifex aeolicus (strain VF5).